Here is a 278-residue protein sequence, read N- to C-terminus: Leucine-rich repeat-containing protein 10 (278 aa).

LRR repeat units lie at residues 30-51 (LDRM…VCSF), 52-74 (QELV…LGQL), 76-97 (NLQI…VCTL), 98-121 (KQLC…SLLQ), 123-143 (LRTL…VCEL), 144-166 (SLLK…LQRL), 167-189 (RELR…LLHM), and 191-213 (FLEI…HLSS). The span at 239–250 (RWAEETPEPDPR) shows a compositional bias: basic and acidic residues. Positions 239–278 (RWAEETPEPDPRKARRYALAREESQEAQLPALPPLPPTNS) are disordered. Over residues 269 to 278 (ALPPLPPTNS) the composition is skewed to pro residues.

The protein localises to the nucleus. May play important roles in cardiac development and/or cardiac function. The sequence is that of Leucine-rich repeat-containing protein 10 (LRRC10) from Bos taurus (Bovine).